The following is a 520-amino-acid chain: Probable glycerol-3-phosphate acyltransferase 3 (520 aa).

The next 5 helical transmembrane spans lie at 5–20 (ISIF…RFIL), 64–84 (YFML…LFIL), 88–108 (ISLM…FFGI), 264–284 (TLMN…AAAA), and 286–306 (LFVS…FSGC). The short motif at 334 to 339 (HRTLLD) is the HXXXXD motif element.

This sequence belongs to the GPAT/DAPAT family. Widely expressed at low level. Expressed at higher level in seedlings and leaves.

It is found in the membrane. The catalysed reaction is sn-glycerol 3-phosphate + an acyl-CoA = a 1-acyl-sn-glycero-3-phosphate + CoA. The protein operates within phospholipid metabolism; CDP-diacylglycerol biosynthesis; CDP-diacylglycerol from sn-glycerol 3-phosphate: step 1/3. In terms of biological role, esterifies acyl-group from acyl-ACP to the sn-1 position of glycerol-3-phosphate, an essential step in glycerolipid biosynthesis. This is Probable glycerol-3-phosphate acyltransferase 3 (GPAT3) from Arabidopsis thaliana (Mouse-ear cress).